The following is a 100-amino-acid chain: Thioredoxin (100 aa).

Residues 1–100 (MKHITNKAEL…PKNELKELLK (100 aa)) form the Thioredoxin domain. A disulfide bridge connects residues cysteine 29 and cysteine 32.

This sequence belongs to the thioredoxin family.

Functionally, participates in various redox reactions through the reversible oxidation of its active center dithiol to a disulfide and catalyzes dithiol-disulfide exchange reactions. This is Thioredoxin (trxA) from Mycoplasmoides gallisepticum (strain R(low / passage 15 / clone 2)) (Mycoplasma gallisepticum).